The primary structure comprises 219 residues: 7-cyano-7-deazaguanine synthase (219 aa).

Residue 10-20 (FSGGQDSTTCL) participates in ATP binding. The Zn(2+) site is built by Cys188, Cys196, Cys199, and Cys202.

Belongs to the QueC family. It depends on Zn(2+) as a cofactor.

It catalyses the reaction 7-carboxy-7-deazaguanine + NH4(+) + ATP = 7-cyano-7-deazaguanine + ADP + phosphate + H2O + H(+). Its pathway is purine metabolism; 7-cyano-7-deazaguanine biosynthesis. Its function is as follows. Catalyzes the ATP-dependent conversion of 7-carboxy-7-deazaguanine (CDG) to 7-cyano-7-deazaguanine (preQ(0)). The sequence is that of 7-cyano-7-deazaguanine synthase from Neisseria meningitidis serogroup A / serotype 4A (strain DSM 15465 / Z2491).